A 236-amino-acid polypeptide reads, in one-letter code: DNA repair protein RecO (236 aa).

It belongs to the RecO family.

Involved in DNA repair and RecF pathway recombination. This is DNA repair protein RecO from Haemophilus influenzae (strain 86-028NP).